We begin with the raw amino-acid sequence, 175 residues long: MVSNWLDAAPRRVLALISAACIAMLAFGMYLQHVVGLEPCPMCIVQRYALIGVAVFTGLGSLRGGRGWWMTWGVLALLLSGFGAFVAARQSWLQWYPPEIATCGRDFYGMIENFPISRAIPMIFRGSGDCAAIDWTFLGGSIANWSFVCFVVMALVLLVMLLRAPRPARGGFSAA.

Topologically, residues 1-13 are cytoplasmic; the sequence is MVSNWLDAAPRRV. A helical transmembrane segment spans residues 14–30; it reads LALISAACIAMLAFGMY. Topologically, residues 31–48 are periplasmic; it reads LQHVVGLEPCPMCIVQRY. Cys-40 and Cys-43 are disulfide-bonded. Residues 49–65 traverse the membrane as a helical segment; sequence ALIGVAVFTGLGSLRGG. Residues 66-70 are Cytoplasmic-facing; that stretch reads RGWWM. A helical transmembrane segment spans residues 71–88; the sequence is TWGVLALLLSGFGAFVAA. Over 89 to 144 the chain is Periplasmic; that stretch reads RQSWLQWYPPEIATCGRDFYGMIENFPISRAIPMIFRGSGDCAAIDWTFLGGSIAN. An intrachain disulfide couples Cys-103 to Cys-130. The chain crosses the membrane as a helical span at residues 145 to 163; sequence WSFVCFVVMALVLLVMLLR. The Cytoplasmic portion of the chain corresponds to 164-175; it reads APRPARGGFSAA.

Belongs to the DsbB family.

Its subcellular location is the cell inner membrane. Required for disulfide bond formation in some periplasmic proteins. Acts by oxidizing the DsbA protein. In Paracidovorax citrulli (strain AAC00-1) (Acidovorax citrulli), this protein is Disulfide bond formation protein B.